A 556-amino-acid polypeptide reads, in one-letter code: MVHPLPVFKRYTGNTHQKKAIFGQCRGLPCVAPLLTTVEEAPRGISARVWGHFPKWLNGSLLRIGPGKFEFGKDKYNHWFDGMALLHQFRMAKGTVTYRSKFLQSDTYKANSAKNRIVMSEFGTLATPDPCKNVFERFMSRFELPGKAAAMTDNTNVNYVRYKGDYYLCTETNFMNKVDIETLEKTEKVDWSKFIAVNGATAHPHYDPDGTAYNMGNSFGPFGFSYKVIRVPPEKVDLEETTHGAQVICSIAPTEKGKPSYYHSFGMTRNYIIFIEQPLKMNLWKIATSKIRGKAFSDGISWEPQCNTRFHVVDKHTGQLLPGRYYSKPFVAFHHINAFEDQGCVIIDLCCQDNGRILEVYQLQNLRKAGEELDQVYNSAGRSFPRRFVLPLNVSLNAPEGDNLSPLSYTSASAVKQADGTIWCSHENLHQEDLEKEGGIEFPQIYYGQFSGKKYRFFYGCGFRHLVGDSLIKVDVVNKTLKVWREDGFYPSEPVFVPVPGTNEEDGGVILSVVITPNQNESNFLLVLDAKNFEELGRAEVPVQMPYGFHGTFIPI.

Residues His-203, His-263, His-334, and His-550 each contribute to the Fe cation site.

The protein belongs to the carotenoid oxygenase family. The cofactor is Fe(2+).

It localises to the mitochondrion. It catalyses the reaction all-trans-beta-carotene + O2 = beta-ionone + all-trans-10'-apo-beta-carotenal. The enzyme catalyses 5-cis-lycopene + O2 = 5-cis-10'-apo-lycopenal + (3E,5E)-6,10-dimethylundeca-3,5,9-trien-2-one. It carries out the reaction 13-cis-lycopene + O2 = 13-cis-10'-apo-lycopenal + (3E,5E)-6,10-dimethylundeca-3,5,9-trien-2-one. The catalysed reaction is lutein + O2 = (3R,6R)-hydroxy-alpha-ionone + (3R)-3-hydroxy-10'-apo-beta-carotenal. It catalyses the reaction lutein + O2 = (3R,6R)-3-hydroxy-10'-apo-alpha-carotenal + (3R)-hydroxy-beta-ionone. The enzyme catalyses all-trans-zeaxanthin + 2 O2 = 4,9-dimethyldodeca-2,4,6,8,10-pentaenedial + 2 (3R)-hydroxy-beta-ionone. It carries out the reaction all-trans-zeaxanthin + O2 = (3R)-3-hydroxy-10'-apo-beta-carotenal + (3R)-hydroxy-beta-ionone. The catalysed reaction is beta-cryptoxanthin + O2 = all-trans-10'-apo-beta-carotenal + (3R)-hydroxy-beta-ionone. It catalyses the reaction all-trans-10'-apo-beta-carotenal + O2 = beta-ionone + 4,9-dimethyldodeca-2,4,6,8,10-pentaenedial. The enzyme catalyses (3R)-3-hydroxy-10'-apo-beta-carotenal + O2 = 4,9-dimethyldodeca-2,4,6,8,10-pentaenedial + (3R)-hydroxy-beta-ionone. It carries out the reaction (3R,6R)-3-hydroxy-10'-apo-alpha-carotenal + O2 = (3R,6R)-hydroxy-alpha-ionone + 4,9-dimethyldodeca-2,4,6,8,10-pentaenedial. Its function is as follows. Broad specificity mitochondrial dioxygenase that mediates the asymmetric oxidative cleavage of carotenoids. Cleaves carotenes (pure hydrocarbon carotenoids) such as all-trans-beta-carotene and lycopene as well as xanthophylls (oxygenated carotenoids) such as zeaxanthin, lutein and beta-cryptoxanthin at both the 9,10 and the 9',10' carbon-carbon double bond. Through its function in carotenoids metabolism regulates oxidative stress and the production of important signaling molecules. The protein is Carotenoid-cleaving dioxygenase, mitochondrial of Macaca fascicularis (Crab-eating macaque).